Consider the following 78-residue polypeptide: EAALHLEKGLNQALVDLHALGSARADPHLCDFLENHFLDEEVKLIKKMGDHLTNLRRLSGPQAGLGEYLFERLTLKHD.

Positions Glu-1–Ser-59 constitute a Ferritin-like diiron domain.

It belongs to the ferritin family. As to quaternary structure, oligomer of 24 subunits. There are two types of subunits: L (light) chain and H (heavy) chain. The major chain can be light or heavy, depending on the species and tissue type. The functional molecule forms a roughly spherical shell with a diameter of 12 nm and contains a central cavity into which the insoluble mineral iron core is deposited. Interacts with NCOA4.

The protein resides in the cytoplasmic vesicle. Its subcellular location is the autophagosome. It localises to the cytoplasm. It is found in the autolysosome. Stores iron in a soluble, non-toxic, readily available form. Important for iron homeostasis. Iron is taken up in the ferrous form and deposited as ferric hydroxides after oxidation. Also plays a role in delivery of iron to cells. Mediates iron uptake in capsule cells of the developing kidney. Delivery to lysosomes by the cargo receptor NCOA4 for autophagic degradation and release or iron. This is Ferritin light chain (FTL) from Sus scrofa (Pig).